We begin with the raw amino-acid sequence, 510 residues long: NAD(P)H-quinone oxidoreductase subunit 2 A, chloroplastic (510 aa).

The next 14 membrane-spanning stretches (helical) occupy residues 31-51 (FIFP…IDLT), 59-79 (WFYF…LFRW), 99-119 (IFQF…VEYI), 124-144 (MAIT…MFLC), 149-169 (LITI…LSGY), 184-204 (LLMG…LYGL), 229-249 (ISIA…LAPF), 261-281 (PTPV…ALAT), 295-315 (WHLL…LLAI), 323-343 (MLAY…IVGD), 354-374 (YMLF…LFGL), 395-415 (ALSL…AGFF), 418-438 (LYLF…IGLL), and 484-504 (MTVC…ILAI).

Belongs to the complex I subunit 2 family. NDH is composed of at least 16 different subunits, 5 of which are encoded in the nucleus.

Its subcellular location is the plastid. It is found in the chloroplast thylakoid membrane. The enzyme catalyses a plastoquinone + NADH + (n+1) H(+)(in) = a plastoquinol + NAD(+) + n H(+)(out). It carries out the reaction a plastoquinone + NADPH + (n+1) H(+)(in) = a plastoquinol + NADP(+) + n H(+)(out). Functionally, NDH shuttles electrons from NAD(P)H:plastoquinone, via FMN and iron-sulfur (Fe-S) centers, to quinones in the photosynthetic chain and possibly in a chloroplast respiratory chain. The immediate electron acceptor for the enzyme in this species is believed to be plastoquinone. Couples the redox reaction to proton translocation, and thus conserves the redox energy in a proton gradient. The polypeptide is NAD(P)H-quinone oxidoreductase subunit 2 A, chloroplastic (Oryza sativa subsp. japonica (Rice)).